A 224-amino-acid chain; its full sequence is Synaptonemal complex protein 3 (224 aa).

2 coiled-coil regions span residues 63–97 (RVKC…WEER) and 137–171 (HDSM…QSST).

As to quaternary structure, interacts with gras-1. Interacts with brc-1 and brd-1.

The protein localises to the chromosome. Plays a role in early meiotic events; during prophase I contributes to synaptonemal complex (SC) assembly, synapsis and chiasmata formation and stabilization of homologous chromosomes pairing. Required for restricting SC assembly to bridge paired chromosome axes. Required for the timely progression of meiotic crossover recombination. Required for the synapsis checkpoint. This Caenorhabditis elegans protein is Synaptonemal complex protein 3.